Consider the following 321-residue polypeptide: uncharacterized protein (321 aa).

Residues 1–58 (MTPAQLRAYSAVVRLGSVRAAAAELGLSDAGVSMHVAALRKELDDPLFTRTGAGLAFT) form the HTH lysR-type domain. A DNA-binding region (H-T-H motif) is located at residues 18–37 (VRAAAAELGLSDAGVSMHVA).

This sequence belongs to the LysR transcriptional regulatory family.

This is an uncharacterized protein from Mycobacterium tuberculosis (strain CDC 1551 / Oshkosh).